Consider the following 921-residue polypeptide: DNA ligase (921 aa).

Residues 90–94 (DAAYD), 139–140 (SL), and glutamate 173 contribute to the NAD(+) site. The active-site N6-AMP-lysine intermediate is the lysine 175. The NAD(+) site is built by arginine 196, glutamate 235, lysine 360, and lysine 384. Zn(2+)-binding residues include cysteine 481, cysteine 484, cysteine 500, and cysteine 506. The disordered stretch occupies residues 663-688 (EAAIESAETQGGAASETTGAPTGAEA). In terms of domain architecture, BRCT spans 839 to 921 (SLPQTLAGKT…AQLLETGSID (83 aa)).

Belongs to the NAD-dependent DNA ligase family. LigA subfamily. Mg(2+) serves as cofactor. It depends on Mn(2+) as a cofactor.

The enzyme catalyses NAD(+) + (deoxyribonucleotide)n-3'-hydroxyl + 5'-phospho-(deoxyribonucleotide)m = (deoxyribonucleotide)n+m + AMP + beta-nicotinamide D-nucleotide.. Functionally, DNA ligase that catalyzes the formation of phosphodiester linkages between 5'-phosphoryl and 3'-hydroxyl groups in double-stranded DNA using NAD as a coenzyme and as the energy source for the reaction. It is essential for DNA replication and repair of damaged DNA. In Bifidobacterium longum subsp. infantis (strain ATCC 15697 / DSM 20088 / JCM 1222 / NCTC 11817 / S12), this protein is DNA ligase.